Consider the following 355-residue polypeptide: Putative transport protein PH1000 (355 aa).

Helical transmembrane passes span 34 to 54, 55 to 75, 84 to 104, 158 to 178, 212 to 232, 240 to 260, 274 to 294, and 310 to 330; these read VTWI…LPFF, SPLF…IKLK, AILL…ILVY, FSVP…YFFL, VWLL…LIFK, ILAG…GWMI, IIAG…LPDF, and VLVL…GLII.

This sequence belongs to the autoinducer-2 exporter (AI-2E) (TC 2.A.86) family.

It localises to the cell membrane. This Pyrococcus horikoshii (strain ATCC 700860 / DSM 12428 / JCM 9974 / NBRC 100139 / OT-3) protein is Putative transport protein PH1000.